We begin with the raw amino-acid sequence, 525 residues long: Neutrophil cytosol factor 2 (525 aa).

3 TPR repeats span residues 37–70 (SRIC…DKHS), 71–104 (AVAY…LRGN), and 121–154 (CEVL…KSEP). The residue at position 233 (T233) is a Phosphothreonine. Residues 240–299 (LEGEAHRVLFGFVPETPEELQVMPGNIVFVLKKGSDNWATVMFNGQKGLVPCNYLEPVEL) form the SH3 1 domain. Residues 304–343 (QSQPQEDTSPESDIPPPPNSSPPGRLQLSPGHKQKEPKEL) are disordered. S324 and S398 each carry phosphoserine. One can recognise a PB1 domain in the interval 350 to 428 (PYMLKVHYKY…YCLTLWCEHT (79 aa)). A disordered region spans residues 437 to 457 (EPIQRENSDASKQTTEPQPKE). Residues 456–515 (KEGTQVVAIFSYEAAQPEDLEFVEGDVILVLSHVNEEWLEGECKGKVGIFPKAFVEGCAA) enclose the SH3 2 domain.

The protein belongs to the NCF2/NOXA1 family. In terms of assembly, component of the phagocyte NADPH oxidase complex composed of an obligatory core heterodimer formed by the membrane proteins CYBA and CYBB and the cytosolic regulatory subunits NCF1/p47-phox, NCF2/p67-phox, NCF4/p40-phox and the small GTPase RAC1 or RAC2. Part of a cytosolic complex composed at least by NCF1, NCF2 and NCF4. Interacts with NCF4. Interacts (via the C-terminal SH3 domain) with NCF1 (via C-terminus). Interacts with SYTL1 and RAC1. May interact with NOXO1. Interacts with S100A8 and calprotectin (S100A8/9). Interacts with GBP7 (via GB1/RHD3-type G domain). Interacts with CYBB; the interaction is enhanced in the presence of GBP7.

The protein resides in the cytoplasm. Its function is as follows. NCF2, NCF1, and a membrane bound cytochrome b558 are required for activation of the latent NADPH oxidase (necessary for superoxide production). Functionally, subunit of the phagocyte NADPH oxidase complex that mediates the transfer of electrons from cytosolic NADPH to O2 to produce the superoxide anion (O2(-)). In the activated complex, electrons are first transferred from NADPH to flavin adenine dinucleotide (FAD) and subsequently transferred via two heme molecules to molecular oxygen, producing superoxide through an outer-sphere reaction. Activation of the NADPH oxidase complex is initiated by the assembly of cytosolic subunits of the NADPH oxidase complex with the core NADPH oxidase complex to form a complex at the plasma membrane or phagosomal membrane. This activation process is initiated by phosphorylation dependent binding of the cytosolic NCF1/p47-phox subunit to the C-terminus of CYBA/p22-phox. The polypeptide is Neutrophil cytosol factor 2 (Mus musculus (Mouse)).